A 213-amino-acid polypeptide reads, in one-letter code: Nucleoside triphosphate pyrophosphatase (213 aa).

Residue D79 is the Proton acceptor of the active site.

This sequence belongs to the Maf family. A divalent metal cation is required as a cofactor.

It localises to the cytoplasm. The catalysed reaction is a ribonucleoside 5'-triphosphate + H2O = a ribonucleoside 5'-phosphate + diphosphate + H(+). It carries out the reaction a 2'-deoxyribonucleoside 5'-triphosphate + H2O = a 2'-deoxyribonucleoside 5'-phosphate + diphosphate + H(+). In terms of biological role, nucleoside triphosphate pyrophosphatase. May have a dual role in cell division arrest and in preventing the incorporation of modified nucleotides into cellular nucleic acids. In Mycobacterium leprae (strain Br4923), this protein is Nucleoside triphosphate pyrophosphatase.